A 416-amino-acid polypeptide reads, in one-letter code: Probable endo-beta-1,4-glucanase celB (416 aa).

The first 17 residues, 1–17, serve as a signal peptide directing secretion; the sequence is MIWTLAPFVALLPLVTA. N-linked (GlcNAc...) asparagine glycosylation is found at asparagine 45, asparagine 104, asparagine 117, and asparagine 135. The Nucleophile role is filled by glutamate 214. Glutamate 219 functions as the Proton donor in the catalytic mechanism. 4 N-linked (GlcNAc...) asparagine glycosylation sites follow: asparagine 233, asparagine 278, asparagine 292, and asparagine 382.

The protein belongs to the glycosyl hydrolase 7 (cellulase C) family.

It is found in the secreted. It catalyses the reaction Endohydrolysis of (1-&gt;4)-beta-D-glucosidic linkages in cellulose, lichenin and cereal beta-D-glucans.. Functionally, has endoglucanase activity on substrates containing beta-1,4 glycosidic bonds, like in carboxymethylcellulose (CMC), hydroxyethylcellulose (HEC) and beta-glucan. Involved in the degradation of complex natural cellulosic substrates. This chain is Probable endo-beta-1,4-glucanase celB (celB), found in Aspergillus flavus (strain ATCC 200026 / FGSC A1120 / IAM 13836 / NRRL 3357 / JCM 12722 / SRRC 167).